The primary structure comprises 600 residues: Methionine--tRNA ligase (600 aa).

The 'HIGH' region motif lies at 12–22; it reads PYANGPRHIGH. Residues Cys-144, Cys-147, Cys-157, and Cys-160 each contribute to the Zn(2+) site. The 'KMSKS' region motif lies at 351–355; sequence KFSSS. Ser-354 provides a ligand contact to ATP.

Belongs to the class-I aminoacyl-tRNA synthetase family. MetG type 1 subfamily. As to quaternary structure, monomer. The cofactor is Zn(2+).

The protein resides in the cytoplasm. It catalyses the reaction tRNA(Met) + L-methionine + ATP = L-methionyl-tRNA(Met) + AMP + diphosphate. Is required not only for elongation of protein synthesis but also for the initiation of all mRNA translation through initiator tRNA(fMet) aminoacylation. This is Methionine--tRNA ligase from Chloroflexus aurantiacus (strain ATCC 29364 / DSM 637 / Y-400-fl).